The sequence spans 383 residues: La protein homolog (383 aa).

The segment at 1-43 is disordered; the sequence is MTEVEAKATATEETTKEEEEAPETTAEQTEESAQETSENVSKL. Over residues 15–33 the composition is skewed to acidic residues; sequence TKEEEEAPETTAEQTEESA. Positions 37 to 129 constitute an HTH La-type RNA-binding domain; sequence SENVSKLEAS…RRHPERPLPE (93 aa). In terms of domain architecture, RRM spans 141 to 228; sequence RTVYVKGFAP…RKMQDDYFEE (88 aa). The xRRM domain occupies 249–368; it reads HLPKGASVHL…RTPEGRQASR (120 aa). The disordered stretch occupies residues 343 to 383; it reads KDQQARRQASNARNKGRTPEGRQASRPPQEWRRKAKGGRGE.

The protein resides in the nucleus. It localises to the cytoplasm. Its function is as follows. May be involved in transcription termination by RNA polymerase III. Binds RNA and DNA. Binds to the 3' end of the minus strand of Sindbis virus RNA. This may be significant for Sindbis virus RNA replication. This is La protein homolog from Aedes albopictus (Asian tiger mosquito).